We begin with the raw amino-acid sequence, 256 residues long: UPF0246 protein Swoo_1284 (256 aa).

This sequence belongs to the UPF0246 family.

The chain is UPF0246 protein Swoo_1284 from Shewanella woodyi (strain ATCC 51908 / MS32).